We begin with the raw amino-acid sequence, 328 residues long: Methionyl-tRNA formyltransferase (328 aa).

A (6S)-5,6,7,8-tetrahydrofolate-binding site is contributed by 110 to 113; the sequence is SLLP.

This sequence belongs to the Fmt family.

It carries out the reaction L-methionyl-tRNA(fMet) + (6R)-10-formyltetrahydrofolate = N-formyl-L-methionyl-tRNA(fMet) + (6S)-5,6,7,8-tetrahydrofolate + H(+). Functionally, attaches a formyl group to the free amino group of methionyl-tRNA(fMet). The formyl group appears to play a dual role in the initiator identity of N-formylmethionyl-tRNA by promoting its recognition by IF2 and preventing the misappropriation of this tRNA by the elongation apparatus. The protein is Methionyl-tRNA formyltransferase of Prochlorococcus marinus (strain AS9601).